The sequence spans 215 residues: 24 kDa Ras-like protein (215 aa).

Residue 17 to 24 participates in GTP binding; sequence GGGGVGKS. Residues 39–47 carry the Effector region motif; the sequence is YDPTIEDSY. GTP is bound by residues 64–68 and 123–126; these read DTAGQ and NKCD. The interval 179-199 is disordered; that stretch reads QTGRPAIAAGGGGPAGSYTQD. Cysteine 212 is modified (cysteine methyl ester). The S-farnesyl cysteine moiety is linked to residue cysteine 212. The propeptide at 213–215 is removed in mature form; it reads VIA.

The protein belongs to the small GTPase superfamily. Ras family.

The protein localises to the cell membrane. It catalyses the reaction GTP + H2O = GDP + phosphate + H(+). Its function is as follows. Ras proteins bind GDP/GTP and possess intrinsic GTPase activity. The polypeptide is 24 kDa Ras-like protein (CC-RAS) (Coprinopsis cinerea (strain Okayama-7 / 130 / ATCC MYA-4618 / FGSC 9003) (Inky cap fungus)).